Reading from the N-terminus, the 327-residue chain is Dolichyl-phosphate beta-glucosyltransferase (327 aa).

Residues 1 to 15 (MIDLFINIASFTIYG) are Lumenal-facing. The chain crosses the membrane as a helical span at residues 16-36 (IPVIPLFIIVFVILSYYLLLL). The Cytoplasmic segment spans residues 37-327 (HDESPLWLEK…YLLGIWKIKS (291 aa)).

Belongs to the glycosyltransferase 2 family.

It localises to the endoplasmic reticulum membrane. The catalysed reaction is a di-trans,poly-cis-dolichyl phosphate + UDP-alpha-D-glucose = a di-trans,poly-cis-dolichyl beta-D-glucosyl phosphate + UDP. Its pathway is protein modification; protein glycosylation. In terms of biological role, endoplasmic reticulum membrane-bound UDP-glucose:dolichyl-phosphate glucosyltransferase involved in protein N-linked glycosylation. The sequence is that of Dolichyl-phosphate beta-glucosyltransferase (alg5) from Dictyostelium discoideum (Social amoeba).